We begin with the raw amino-acid sequence, 645 residues long: Sodium-dependent nutrient amino acid transporter 1 (645 aa).

Positions 1-48 are disordered; it reads MELKTMPHNGANGSPQHNNNNNSNNNNNVSSDTKTDNNEKEAQKKDEG. Residues 1-51 are Cytoplasmic-facing; it reads MELKTMPHNGANGSPQHNNNNNSNNNNNVSSDTKTDNNEKEAQKKDEGRTN. Over residues 18–32 the composition is skewed to low complexity; sequence NNNNNSNNNNNVSSD. The span at 33–48 shows a compositional bias: basic and acidic residues; sequence TKTDNNEKEAQKKDEG. The next 3 membrane-spanning stretches (helical) occupy residues 52–72, 85–105, and 138–158; these read WSNGIEFLMSCISVSVGLGNV, GAFLIPYIIVLFLIGKPMYYL, and TICIITYYSSLLALTLYYLFV. N-linked (GlcNAc...) asparagine glycans are attached at residues Asn-191 and Asn-205. 7 helical membrane-spanning segments follow: residues 234 to 254, 264 to 284, 313 to 333, 347 to 367, 407 to 427, 454 to 474, and 480 to 500; these read IPDWKLTIALFVSWVVIFLVI, AAYFLALFPYVVLFALLGRAV, AVVQCFFSLAVGCGPIIMFAS, IVTTLDTLTSLLGGITIFAIL, LFSVLFFFMLFVLGIGSIVAL, CGFLMGLVYVTPGGQWILTLV, and TYVVFILAIFELSGIVWIYGL. Asn-514 is a glycosylation site (N-linked (GlcNAc...) asparagine). Transmembrane regions (helical) follow at residues 522 to 542 and 559 to 579; these read CWSFFTPVMMIVIFIYSMATI and AGWLLFAVGAAQFPLWGWWYI.

The protein belongs to the sodium:neurotransmitter symporter (SNF) (TC 2.A.22) family.

It localises to the membrane. Functionally, unusual broad substrate spectrum amino acid:sodium cotransporter that promotes absorption of the D isomers of essential amino acids. Neutral amino acids are the preferred substrates, especially methionine and phenylalanine. The protein is Sodium-dependent nutrient amino acid transporter 1 of Drosophila mojavensis (Fruit fly).